Here is a 25-residue protein sequence, read N- to C-terminus: Xenoposin precursor fragment BM1 (25 aa).

In terms of tissue distribution, expressed by the skin glands.

Its subcellular location is the secreted. Functionally, antimicrobial peptide. This Xenopus boumbaensis (Mawa clawed frog) protein is Xenoposin precursor fragment BM1.